Consider the following 101-residue polypeptide: 2-amino-4-ketopentanoate thiolase alpha subunit (101 aa).

This sequence belongs to the OrtA family. As to quaternary structure, heterodimer with OrtB.

The catalysed reaction is D-alanine + acetyl-CoA = (2R)-2-amino-4-oxopentanoate + CoA. Completely inhibited by p-chloromercuribenzoate (p-ClHgBzO) and acetyl-CoA, and partially inhibited by N-ethylmaleimide. Involved in the ornithine fermentation pathway. Catalyzes the thiolytic cleavage of 2-amino-4-ketopentanoate (AKP) with coenzyme A (CoA) to form acetyl-CoA and alanine. It is strictly specific for AKP. This chain is 2-amino-4-ketopentanoate thiolase alpha subunit, found in Acetoanaerobium sticklandii (strain ATCC 12662 / DSM 519 / JCM 1433 / CCUG 9281 / NCIMB 10654 / HF) (Clostridium sticklandii).